The primary structure comprises 59 residues: Small ribosomal subunit protein bS21 (59 aa).

Residues 34 to 59 (KHEHYEKPSVKRKKKSEAARRRKRSF) are disordered. The span at 43–59 (VKRKKKSEAARRRKRSF) shows a compositional bias: basic residues.

The protein belongs to the bacterial ribosomal protein bS21 family.

The polypeptide is Small ribosomal subunit protein bS21 (Desulforudis audaxviator (strain MP104C)).